Reading from the N-terminus, the 316-residue chain is Ribosomal protein L11 methyltransferase (316 aa).

Thr162, Gly183, Asp205, and Asn248 together coordinate S-adenosyl-L-methionine.

This sequence belongs to the methyltransferase superfamily. PrmA family.

The protein localises to the cytoplasm. The catalysed reaction is L-lysyl-[protein] + 3 S-adenosyl-L-methionine = N(6),N(6),N(6)-trimethyl-L-lysyl-[protein] + 3 S-adenosyl-L-homocysteine + 3 H(+). Methylates ribosomal protein L11. The polypeptide is Ribosomal protein L11 methyltransferase (Levilactobacillus brevis (strain ATCC 367 / BCRC 12310 / CIP 105137 / JCM 1170 / LMG 11437 / NCIMB 947 / NCTC 947) (Lactobacillus brevis)).